The following is a 299-amino-acid chain: tRNA pseudouridine synthase A (299 aa).

Catalysis depends on D67, which acts as the Nucleophile. Y125 contacts substrate.

This sequence belongs to the tRNA pseudouridine synthase TruA family. In terms of assembly, homodimer.

It catalyses the reaction uridine(38/39/40) in tRNA = pseudouridine(38/39/40) in tRNA. Functionally, formation of pseudouridine at positions 38, 39 and 40 in the anticodon stem and loop of transfer RNAs. This chain is tRNA pseudouridine synthase A, found in Parasynechococcus marenigrum (strain WH8102).